The sequence spans 95 residues: Aspartyl/glutamyl-tRNA(Asn/Gln) amidotransferase subunit C (95 aa).

The protein belongs to the GatC family. As to quaternary structure, heterotrimer of A, B and C subunits.

The enzyme catalyses L-glutamyl-tRNA(Gln) + L-glutamine + ATP + H2O = L-glutaminyl-tRNA(Gln) + L-glutamate + ADP + phosphate + H(+). The catalysed reaction is L-aspartyl-tRNA(Asn) + L-glutamine + ATP + H2O = L-asparaginyl-tRNA(Asn) + L-glutamate + ADP + phosphate + 2 H(+). Allows the formation of correctly charged Asn-tRNA(Asn) or Gln-tRNA(Gln) through the transamidation of misacylated Asp-tRNA(Asn) or Glu-tRNA(Gln) in organisms which lack either or both of asparaginyl-tRNA or glutaminyl-tRNA synthetases. The reaction takes place in the presence of glutamine and ATP through an activated phospho-Asp-tRNA(Asn) or phospho-Glu-tRNA(Gln). This is Aspartyl/glutamyl-tRNA(Asn/Gln) amidotransferase subunit C from Rhodospirillum centenum (strain ATCC 51521 / SW).